The primary structure comprises 126 residues: 14 kDa phosphohistidine phosphatase (126 aa).

Lys-22 provides a ligand contact to substrate. The Proton acceptor role is filled by His-54. 95 to 97 (SMG) contacts substrate.

It belongs to the janus family. Monomer.

It localises to the cytoplasm. It carries out the reaction N(pros)-phospho-L-histidyl-[protein] + H2O = L-histidyl-[protein] + phosphate. The catalysed reaction is N(tele)-phospho-L-histidyl-[protein] + H2O = L-histidyl-[protein] + phosphate. In terms of biological role, exhibits phosphohistidine phosphatase activity. The protein is 14 kDa phosphohistidine phosphatase (PHPT1) of Sus scrofa (Pig).